The primary structure comprises 309 residues: MPDLDSIVKDIAAEMRARPDRGAVASYIPELARVDAQGFGLVVIDGEGRVAAGGDADTPFSIQSISKVFTLTLALGMVGDRLWRRVGREPSGSPFNSIVQLEREHGIPRNPFINAGAIAVTDLILSGHQPREALGEILRFMQFVAQDDSITIDERVAASEKRTGFRNAALANYMRSFDVIENPVDYTLGVYFHHCAIAMTCRQLATAGLFLAYSGHHPLAGHSVISAERARRINAIMLTCGHYDGSGDFAYRVGLPGKSGVGGGILAVAPGKASICVWSPGLDAAGNSHLGRIALEMLVKRTGWSIFGV.

Substrate contacts are provided by S64, N114, E160, N167, Y191, Y243, and V261.

It belongs to the glutaminase family. As to quaternary structure, homotetramer.

The catalysed reaction is L-glutamine + H2O = L-glutamate + NH4(+). The sequence is that of Glutaminase from Methylorubrum extorquens (strain PA1) (Methylobacterium extorquens).